Consider the following 388-residue polypeptide: Processive diacylglycerol beta-glucosyltransferase (388 aa).

This sequence belongs to the glycosyltransferase 28 family. UgtP subfamily.

It localises to the cell membrane. The catalysed reaction is a 1,2-diacyl-3-O-(beta-D-glucopyranosyl)-sn-glycerol + UDP-alpha-D-glucose = a 1,2-diacyl-3-O-(beta-D-Glc-(1-&gt;6)-beta-D-Glc)-sn-glycerol + UDP + H(+). The enzyme catalyses a 1,2-diacyl-3-O-(beta-D-Glc-(1-&gt;6)-beta-D-Glc)-sn-glycerol + UDP-alpha-D-glucose = a 1,2-diacyl-3-O-(beta-D-Glc-(1-&gt;6)-beta-D-Glc-(1-&gt;6)-beta-D-Glc)-sn-glycerol + UDP + H(+). It carries out the reaction a 1,2-diacyl-sn-glycerol + UDP-alpha-D-glucose = a 1,2-diacyl-3-O-(beta-D-glucopyranosyl)-sn-glycerol + UDP + H(+). The protein operates within glycolipid metabolism; diglucosyl-diacylglycerol biosynthesis. Processive glucosyltransferase involved in the biosynthesis of both the bilayer- and non-bilayer-forming membrane glucolipids. Is able to successively transfer up to three glucosyl residues to diacylglycerol (DAG), thereby catalyzing the formation of beta-monoglucosyl-DAG (3-O-(beta-D-glucopyranosyl)-1,2-diacyl-sn-glycerol), beta-diglucosyl-DAG (3-O-(beta-D-glucopyranosyl-beta-(1-&gt;6)-D-glucopyranosyl)-1,2-diacyl-sn-glycerol) and beta-triglucosyl-DAG (3-O-(beta-D-glucopyranosyl-beta-(1-&gt;6)-D-glucopyranosyl-beta-(1-&gt;6)-D-glucopyranosyl)-1,2-diacyl-sn-glycerol). Beta-diglucosyl-DAG is the predominant glycolipid found in Bacillales and is also used as a membrane anchor for lipoteichoic acid (LTA). In Bacillus cereus (strain 03BB102), this protein is Processive diacylglycerol beta-glucosyltransferase.